The sequence spans 124 residues: Small ribosomal subunit protein uS12 (124 aa).

3-methylthioaspartic acid is present on aspartate 89.

The protein belongs to the universal ribosomal protein uS12 family. As to quaternary structure, part of the 30S ribosomal subunit. Contacts proteins S8 and S17. May interact with IF1 in the 30S initiation complex.

With S4 and S5 plays an important role in translational accuracy. Functionally, interacts with and stabilizes bases of the 16S rRNA that are involved in tRNA selection in the A site and with the mRNA backbone. Located at the interface of the 30S and 50S subunits, it traverses the body of the 30S subunit contacting proteins on the other side and probably holding the rRNA structure together. The combined cluster of proteins S8, S12 and S17 appears to hold together the shoulder and platform of the 30S subunit. This is Small ribosomal subunit protein uS12 from Hamiltonella defensa subsp. Acyrthosiphon pisum (strain 5AT).